Here is a 238-residue protein sequence, read N- to C-terminus: Protein TIFY 3A (238 aa).

The 36-residue stretch at 39–74 (EPDASTQLTIIFGGSCRVFNGVPAQKVQEIIRIAFA) folds into the Tify 1 domain. The short motif at 101–120 (PIARRRSLQRFLEKRRDRST) is the Jas 1 element. Positions 103 to 110 (ARRRSLQR) match the Nuclear localization signal 1 motif. The Tify 2 domain occupies 125 to 160 (SMILPSQLTIIFGGSFSVFDGIPAEKVQEILHIAAA). The short motif at 197–222 (PIARRRSLQRFFEKRRHRFVHTKPYS) is the Jas 2 element. The short motif at 199–206 (ARRRSLQR) is the Nuclear localization signal 2 element. The tract at residues 219–238 (KPYSATTSEADKNETSPIVT) is disordered.

This sequence belongs to the TIFY/JAZ family. Interacts with MYC2, MYB21, MYB24, AFPH2/NINJA, TIFY10A/JAZ1, TIFY10B/JAZ2, TIFY6B/JAZ3, TIFY6A/JAZ4, TIFY7/JAZ9 and TIFY9/JAZ10. Post-translationally, ubiquitinated. Targeted for degradation by the SCF(COI1) E3 ubiquitin ligase-proteasome pathway during jasmonate signaling.

The protein resides in the nucleus. Functionally, repressor of jasmonate (JA) responses. Targets MYC2, MYC3 and MYC4 that are JA-dependent transcription activators. This Arabidopsis thaliana (Mouse-ear cress) protein is Protein TIFY 3A (TIFY3A).